We begin with the raw amino-acid sequence, 148 residues long: Large ribosomal subunit protein uL15 (148 aa).

Residues 1–10 (MQLHNLEYKK) show a composition bias toward basic and acidic residues. Residues 1-42 (MQLHNLEYKKGSRNHKEKRVGRGHGSGLGKTSGRGQDGQKAR) form a disordered region. A compositionally biased stretch (basic residues) spans 11-22 (GSRNHKEKRVGR). A compositionally biased stretch (gly residues) spans 23–36 (GHGSGLGKTSGRGQ).

It belongs to the universal ribosomal protein uL15 family. In terms of assembly, part of the 50S ribosomal subunit.

Its function is as follows. Binds to the 23S rRNA. The sequence is that of Large ribosomal subunit protein uL15 from Ureaplasma parvum serovar 3 (strain ATCC 27815 / 27 / NCTC 11736).